The following is a 154-amino-acid chain: Small ribosomal subunit protein uS15 (154 aa).

The span at 1 to 14 shows a compositional bias: basic residues; the sequence is MAPVPHRSRHKKGR. Residues 1 to 24 form a disordered region; it reads MAPVPHRSRHKKGRSGSVRPAHPT.

The protein belongs to the universal ribosomal protein uS15 family. In terms of assembly, part of the 30S ribosomal subunit.

In Pyrobaculum arsenaticum (strain DSM 13514 / JCM 11321 / PZ6), this protein is Small ribosomal subunit protein uS15.